The following is a 190-amino-acid chain: dCTP deaminase, dUMP-forming (190 aa).

DCTP is bound by residues 101-106, D119, 127-129, Q148, Y162, and Q174; these read KSSLGR and TLE. The active-site Proton donor/acceptor is the E129. The segment at 162–190 is disordered; sequence YGSASAGSKYQGQRGPTPSRSYENFIKNT. Positions 166–190 are enriched in polar residues; the sequence is SAGSKYQGQRGPTPSRSYENFIKNT.

The protein belongs to the dCTP deaminase family. As to quaternary structure, homotrimer.

The catalysed reaction is dCTP + 2 H2O = dUMP + NH4(+) + diphosphate. Its pathway is pyrimidine metabolism; dUMP biosynthesis; dUMP from dCTP: step 1/1. Bifunctional enzyme that catalyzes both the deamination of dCTP to dUTP and the hydrolysis of dUTP to dUMP without releasing the toxic dUTP intermediate. In Mycobacterium leprae (strain Br4923), this protein is dCTP deaminase, dUMP-forming.